Reading from the N-terminus, the 475-residue chain is Ataxin-10 (475 aa).

An Omega-N-methylarginine modification is found at Arg-10. A phosphoserine mark is found at Ser-12 and Ser-77. Thr-82 is modified (phosphothreonine). At Ser-430 the chain carries Phosphoserine.

It belongs to the ataxin-10 family. In terms of assembly, homooligomer. Interacts with GNB2. Interacts with IQCB1. Interacts with OGT. Post-translationally, polyubiquitinated. Phosphorylation at Ser-12 by AURKB promotes the association of ATXN10 with PLK1. Phosphorylation at Ser-77 and Thr-82 by PLK1 may play a role in the regulation of cytokinesis and may stimulate the proteasome-mediated degradation of ATXN10.

It is found in the cytoplasm. The protein localises to the perinuclear region. It localises to the cytoskeleton. The protein resides in the cilium basal body. Its subcellular location is the microtubule organizing center. It is found in the centrosome. The protein localises to the centriole. It localises to the midbody. In terms of biological role, may play a role in the regulation of cytokinesis. May play a role in signaling by stimulating protein glycosylation. Induces neuritogenesis by activating the Ras-MAP kinase pathway and is necessary for the survival of cerebellar neurons. Does not appear to play a major role in ciliogenesis. This is Ataxin-10 (ATXN10) from Bos taurus (Bovine).